The sequence spans 249 residues: 2,3-bisphosphoglycerate-dependent phosphoglycerate mutase 2 (249 aa).

Substrate is bound by residues 8-15 (RHGESIWN), 21-22 (TG), Arg60, 87-90 (ERHY), Lys98, 114-115 (RR), and 183-184 (GN). The active-site Tele-phosphohistidine intermediate is the His9. Glu87 functions as the Proton donor/acceptor in the catalytic mechanism.

Belongs to the phosphoglycerate mutase family. BPG-dependent PGAM subfamily. Homodimer.

The enzyme catalyses (2R)-2-phosphoglycerate = (2R)-3-phosphoglycerate. It functions in the pathway carbohydrate degradation; glycolysis; pyruvate from D-glyceraldehyde 3-phosphate: step 3/5. Functionally, catalyzes the interconversion of 2-phosphoglycerate and 3-phosphoglycerate. This Nitrosomonas europaea (strain ATCC 19718 / CIP 103999 / KCTC 2705 / NBRC 14298) protein is 2,3-bisphosphoglycerate-dependent phosphoglycerate mutase 2.